The sequence spans 135 residues: UPF0299 membrane protein ECA2828 (135 aa).

4 consecutive transmembrane segments (helical) span residues 5–25 (FIVCWQYLRAFALIYLCLLAG), 30–50 (ALLPFTIPGSIIGMLVLFTLL), 63–83 (GCYLLIRHMALLFVPIGVGVM), and 93–113 (FGPIVVSCLISTFIVMLVVGF).

It belongs to the UPF0299 family.

It is found in the cell inner membrane. The sequence is that of UPF0299 membrane protein ECA2828 from Pectobacterium atrosepticum (strain SCRI 1043 / ATCC BAA-672) (Erwinia carotovora subsp. atroseptica).